A 720-amino-acid polypeptide reads, in one-letter code: Polyribonucleotide nucleotidyltransferase (720 aa).

The Mg(2+) site is built by Asp487 and Asp493. Residues 554–613 enclose the KH domain; sequence PRITTISIPKEKIREVIGTGGKVIREICEQTGAKIDIDDDGTIKVASVDADAAQRAIDWI. The region spanning 623–691 is the S1 motif domain; sequence GVIYNGKVVK…DRGKVKLSMK (69 aa). Positions 695-720 are disordered; it reads QTTGEDISAQLEAERAASKRERHHED. The span at 706 to 720 shows a compositional bias: basic and acidic residues; the sequence is EAERAASKRERHHED.

This sequence belongs to the polyribonucleotide nucleotidyltransferase family. It depends on Mg(2+) as a cofactor.

It localises to the cytoplasm. The enzyme catalyses RNA(n+1) + phosphate = RNA(n) + a ribonucleoside 5'-diphosphate. In terms of biological role, involved in mRNA degradation. Catalyzes the phosphorolysis of single-stranded polyribonucleotides processively in the 3'- to 5'-direction. This is Polyribonucleotide nucleotidyltransferase from Paramagnetospirillum magneticum (strain ATCC 700264 / AMB-1) (Magnetospirillum magneticum).